The primary structure comprises 385 residues: Mitochondrial fission regulator 2 (385 aa).

Serine 2 is subject to N-acetylserine. Serine 119 bears the Phosphoserine mark. Residues 195 to 268 (SVDPDQLPGS…SHHSKSQRNK (74 aa)) are disordered. Residues 207–216 (SPPPPPPLPP) are compositionally biased toward pro residues. Residues 231–257 (PGSNNICDSDNPATEMSKQNPAANKTN) show a composition bias toward polar residues. Residues serine 291 and serine 328 each carry the phosphoserine modification. The disordered stretch occupies residues 331-363 (KENRSWESSPFSSPETSRFGHHISQSEGQRTKE). The span at 336-346 (WESSPFSSPET) shows a compositional bias: polar residues.

The protein belongs to the MTFR1 family.

Its subcellular location is the mitochondrion. May play a role in mitochondrial aerobic respiration essentially in the testis. Can also promote mitochondrial fission. The polypeptide is Mitochondrial fission regulator 2 (MTFR2) (Homo sapiens (Human)).